The primary structure comprises 137 residues: Small ribosomal subunit protein bS16 (137 aa).

This sequence belongs to the bacterial ribosomal protein bS16 family.

This chain is Small ribosomal subunit protein bS16, found in Leuconostoc citreum (strain KM20).